Here is a 495-residue protein sequence, read N- to C-terminus: BUB3-interacting and GLEBS motif-containing protein ZNF207 (495 aa).

The segment at 1-92 (MGRKKKKQLK…EGIPEKDMDE (92 aa)) is microtubule-binding region. C2H2-type zinc fingers lie at residues 11 to 34 (PWCW…KAKH) and 35 to 58 (FKCH…MQVH). Positions 99 to 111 (QKTQESQKKKQQD) are enriched in basic and acidic residues. Disordered stretches follow at residues 99 to 161 (QKTQ…PGIP), 252 to 292 (PPAP…SNSE), and 316 to 372 (VGTD…ATLT). Residues 112-121 (DSDEYDDDES) show a composition bias toward acidic residues. The segment covering 127-136 (FQPQPVQPQQ) has biased composition (polar residues). Pro residues predominate over residues 142 to 161 (MAQPGLPPVPGAPGMPPGIP). Low complexity-rich tracts occupy residues 283–292 (SSSTASSNSE) and 326–372 (TPAA…ATLT). Residues 376 to 408 (ATSKLIHPDEDISLEERRAQLPKYQRNLPRPGQ) are GLEBS. Residues 462 to 495 (PYGQGPPMVPPYQGGPPRPPMGMRPPVMSQGGRY) are disordered. Residues 464–484 (GQGPPMVPPYQGGPPRPPMGM) are compositionally biased toward pro residues.

As to quaternary structure, interacts (via GLEBS region) with BUB3. In day-13 embryo, strongly expressed in the nervous system (brain, spinal cord and dorsal root ganglia), with strong to weak expression in other regions. Continues to be strongly expressed in the neonatal brain while expression is weak in the brain and spinal cord of adult.

Its subcellular location is the nucleus. The protein resides in the chromosome. The protein localises to the centromere. It localises to the kinetochore. It is found in the cytoplasm. Its subcellular location is the cytoskeleton. The protein resides in the spindle. Kinetochore- and microtubule-binding protein that plays a key role in spindle assembly. ZNF207/BuGZ is mainly composed of disordered low-complexity regions and undergoes phase transition or coacervation to form temperature-dependent liquid droplets. Coacervation promotes microtubule bundling and concentrates tubulin, promoting microtubule polymerization and assembly of spindle and spindle matrix by concentrating its building blocks. Also acts as a regulator of mitotic chromosome alignment by mediating the stability and kinetochore loading of BUB3. Mechanisms by which BUB3 is protected are unclear: according to a first report, ZNF207/BuGZ may act by blocking ubiquitination and proteasomal degradation of BUB3. According to another report, the stabilization is independent of the proteasome. This is BUB3-interacting and GLEBS motif-containing protein ZNF207 from Mus musculus (Mouse).